A 493-amino-acid chain; its full sequence is Stage V sporulation protein AF (493 aa).

5 helical membrane-spanning segments follow: residues 296–316 (FFGILASTLFLPIWFLFVLQP), 334–354 (IPIILQIFLADLGIEFLRMAA), 363–383 (TAMGLIAAVLIGQIAIEVGLF), 387–407 (VILYVSLAAIGTFTTPSYELS), and 418–438 (MILVALFHIKGLVIGFTVLII).

Belongs to the GerABKA family.

It localises to the cell membrane. In Bacillus subtilis (strain 168), this protein is Stage V sporulation protein AF (spoVAF).